We begin with the raw amino-acid sequence, 427 residues long: Serine--tRNA ligase (427 aa).

230–232 provides a ligand contact to L-serine; it reads TSE. 261 to 263 serves as a coordination point for ATP; sequence RSE. Residue glutamate 284 coordinates L-serine. Residue 348-351 participates in ATP binding; the sequence is EISS. Serine 384 lines the L-serine pocket.

The protein belongs to the class-II aminoacyl-tRNA synthetase family. Type-1 seryl-tRNA synthetase subfamily. Homodimer. The tRNA molecule binds across the dimer.

The protein localises to the cytoplasm. The enzyme catalyses tRNA(Ser) + L-serine + ATP = L-seryl-tRNA(Ser) + AMP + diphosphate + H(+). The catalysed reaction is tRNA(Sec) + L-serine + ATP = L-seryl-tRNA(Sec) + AMP + diphosphate + H(+). It functions in the pathway aminoacyl-tRNA biosynthesis; selenocysteinyl-tRNA(Sec) biosynthesis; L-seryl-tRNA(Sec) from L-serine and tRNA(Sec): step 1/1. In terms of biological role, catalyzes the attachment of serine to tRNA(Ser). Is also able to aminoacylate tRNA(Sec) with serine, to form the misacylated tRNA L-seryl-tRNA(Sec), which will be further converted into selenocysteinyl-tRNA(Sec). In Desulforapulum autotrophicum (strain ATCC 43914 / DSM 3382 / VKM B-1955 / HRM2) (Desulfobacterium autotrophicum), this protein is Serine--tRNA ligase.